The following is a 272-amino-acid chain: MVVLENPEAGPEEAAAAARVVPGGRRTLPLPGCLPALASSQVKRLSASRRKQHFINQAVRNSDLVPKAKGRKSLQRLENTQYLLTLLETDGATPGPEDGDLAPPAAPGIFAEACSNETYVEIWNDFMNRSGEEQERVLRYLEDEGKSKARRRGPTRGEDRRREDPAYTPRECFQRISRRLRAVLKRSRIPMETLETWEERLLRFFSVSPQAVYTAMLDNSFERLLLHAICQYMDLISASADLEGKRQMKVSNRHLDFLPPGLLLSAYLEQRS.

Positions 141 to 167 (LEDEGKSKARRRGPTRGEDRRREDPAY) are disordered. The segment covering 155–165 (TRGEDRRREDP) has biased composition (basic and acidic residues). The 64-residue stretch at 191–254 (METLETWEER…KRQMKVSNRH (64 aa)) folds into the R3H domain.

The protein localises to the nucleus. This Bos taurus (Bovine) protein is R3H domain-containing protein 4 (R3HDM4).